Consider the following 590-residue polypeptide: UvrABC system protein C (590 aa).

The 78-residue stretch at 15-92 folds into the GIY-YIG domain; the sequence is DLPGCYMMKD…IQKHKPYYNI (78 aa). Residues 197–232 enclose the UVR domain; the sequence is SKIKKELEQKMETASENLEFERAAEIRDQIHYVEMT.

This sequence belongs to the UvrC family. Interacts with UvrB in an incision complex.

It localises to the cytoplasm. Functionally, the UvrABC repair system catalyzes the recognition and processing of DNA lesions. UvrC both incises the 5' and 3' sides of the lesion. The N-terminal half is responsible for the 3' incision and the C-terminal half is responsible for the 5' incision. The chain is UvrABC system protein C from Ligilactobacillus salivarius (strain UCC118) (Lactobacillus salivarius).